The sequence spans 482 residues: Dihydrolipoyllysine-residue acetyltransferase component of pyruvate dehydrogenase complex, mitochondrial (482 aa).

Residues 1-28 (MSAFVRVVPRISRSSVLTRSLRLQLRCY) constitute a mitochondrion transit peptide. Residues 34-110 (HTIIGMPALS…PVNKPIAVYV (77 aa)) form the Lipoyl-binding domain. K75 carries the N6-lipoyllysine modification. The segment at 122–170 (FKLEDSGSDSKTSTKAQPAEPQAEKKQEAPAEETKTSAPEAKKSDVAAP) is disordered. Residues 143–166 (QAEKKQEAPAEETKTSAPEAKKSD) are compositionally biased toward basic and acidic residues. Residues 175–212 (FASPLAKTIALEKGISLKDVHGTGPRGRITKADIESYL) form the Peripheral subunit-binding (PSBD) domain. Positions 214 to 251 (KSSKQSSQTSGAAAATPAAATSSTTAGSAPSPSSTASY) are disordered. A compositionally biased stretch (low complexity) spans 217-250 (KQSSQTSGAAAATPAAATSSTTAGSAPSPSSTAS). Residues H455 and D459 contribute to the active site.

The protein belongs to the 2-oxoacid dehydrogenase family. As to quaternary structure, eukaryotic pyruvate dehydrogenase (PDH) complexes are organized as a core consisting of the oligomeric dihydrolipoamide acetyl-transferase (E2), around which are arranged multiple copies of pyruvate dehydrogenase (E1), dihydrolipoamide dehydrogenase (E3) and protein X (E3BP) bound by non-covalent bonds. (R)-lipoate serves as cofactor.

Its subcellular location is the mitochondrion matrix. It catalyses the reaction N(6)-[(R)-dihydrolipoyl]-L-lysyl-[protein] + acetyl-CoA = N(6)-[(R)-S(8)-acetyldihydrolipoyl]-L-lysyl-[protein] + CoA. Functionally, the pyruvate dehydrogenase complex catalyzes the overall conversion of pyruvate to acetyl-CoA and CO(2). This Saccharomyces cerevisiae (strain ATCC 204508 / S288c) (Baker's yeast) protein is Dihydrolipoyllysine-residue acetyltransferase component of pyruvate dehydrogenase complex, mitochondrial (LAT1).